We begin with the raw amino-acid sequence, 332 residues long: Succinylglutamate desuccinylase (332 aa).

The Zn(2+) site is built by histidine 59, glutamate 62, and histidine 151. Glutamate 215 is an active-site residue.

The protein belongs to the AspA/AstE family. Succinylglutamate desuccinylase subfamily. The cofactor is Zn(2+).

It carries out the reaction N-succinyl-L-glutamate + H2O = L-glutamate + succinate. It participates in amino-acid degradation; L-arginine degradation via AST pathway; L-glutamate and succinate from L-arginine: step 5/5. In terms of biological role, transforms N(2)-succinylglutamate into succinate and glutamate. This chain is Succinylglutamate desuccinylase, found in Pseudomonas aeruginosa (strain UCBPP-PA14).